The following is a 210-amino-acid chain: Probable molybdenum cofactor guanylyltransferase (210 aa).

GTP contacts are provided by residues 18–20, K31, N59, D86, and D111; that span reads LAG. Mg(2+) is bound at residue D111.

Belongs to the MobA family. Mg(2+) is required as a cofactor.

The protein localises to the cytoplasm. The catalysed reaction is Mo-molybdopterin + GTP + H(+) = Mo-molybdopterin guanine dinucleotide + diphosphate. In terms of biological role, transfers a GMP moiety from GTP to Mo-molybdopterin (Mo-MPT) cofactor (Moco or molybdenum cofactor) to form Mo-molybdopterin guanine dinucleotide (Mo-MGD) cofactor. The sequence is that of Probable molybdenum cofactor guanylyltransferase (nasC) from Haloferax mediterranei (strain ATCC 33500 / DSM 1411 / JCM 8866 / NBRC 14739 / NCIMB 2177 / R-4) (Halobacterium mediterranei).